Consider the following 54-residue polypeptide: Large ribosomal subunit protein bL33A (54 aa).

Belongs to the bacterial ribosomal protein bL33 family.

This is Large ribosomal subunit protein bL33A from Saccharopolyspora erythraea (strain ATCC 11635 / DSM 40517 / JCM 4748 / NBRC 13426 / NCIMB 8594 / NRRL 2338).